The primary structure comprises 400 residues: MPFVKGFEPISLRDTNLFEPIKIGNTQLAHRAVMPPLTRMRATHPGNIPNKEWAAVYYGQRAQRPGTMIITEGTFISPQAGGYDNAPGIWSDEQVAEWKNIFLAIHDCQSFAWVQLWSLGWASFPDVLARDGLRYDCASDRVYMNATLQEKAKDANNLEHSLTKDDIKQYIKDYIHAAKNSIAAGADGVEIHSANGYLLNQFLDPHSNKRTDEYGGTIENRARFTLEVVDALIETIGPERVGLRLSPYGTFNSMSGGAEPGIIAQYSYVLGELEKRAKAGKRLAFVHLVEPRVTDPSLVEGEGEYSEGTNDFAYSIWKGPIIRAGNYALHPEVVREQVKDPRTLIGYGRFFISNPDLVYRLEEGLPLNKYDRSTFYTMSAEGYTDYPTYEEAVDLGWNKN.

FMN-binding residues include Thr38 and Gln115. Substrate is bound by residues His192 and Asn195. Tyr197 serves as the catalytic Proton donor. Residues Arg244 and Arg349 each contribute to the FMN site. Tyr376 lines the substrate pocket.

As to quaternary structure, homodimer or heterodimer with OYE2. Requires FMN as cofactor.

The catalysed reaction is A + NADPH + H(+) = AH2 + NADP(+). Its function is as follows. Flavin-dependent enoate reductase that catalyzes the chemo- and stereoslective hydrogenation of electron-poor alkenes. The enzyme is reduced by NADPH, and oxygen, quinones, and alpha,beta-unsaturated aldehydes and ketones can act as electron acceptors to complete catalytic turnover. The physiological oxidant remains elusive. Has a prooxidant activity, increasing reactive oxygen species (ROS) levels when overexpressed. Formation of OYE2-OYE3 heterodimers contribute to the induction of programmed cell death upon oxidative stress. This is NADPH dehydrogenase 3 from Saccharomyces cerevisiae (strain ATCC 204508 / S288c) (Baker's yeast).